The sequence spans 816 residues: Phosphatidylinositol 4-kinase beta (816 aa).

Disordered stretches follow at residues 1–30, 101–120, and 250–318; these read MGDM…GSLL, EDEM…RRRR, and RKRE…SFSS. Gly-2 is modified (N-acetylglycine). Residues 2-68 are interaction with ACBD3; the sequence is GDMVVEPATL…VKLLHGGVAI (67 aa). A compositionally biased stretch (low complexity) spans 10–30; the sequence is TLKPTSEPTPSPSGNNGGSLL. The region spanning 52–242 is the PIK helical domain; sequence CQEVLEKVKL…GTKLRKLILS (191 aa). Ser-258 carries the post-translational modification Phosphoserine. Thr-263 is subject to Phosphothreonine. 5 positions are modified to phosphoserine: Ser-266, Ser-275, Ser-277, Ser-284, and Ser-294. Composition is skewed to polar residues over residues 278 to 297 and 306 to 318; these read DATA…SNPK and SSST…SFSS. Position 428 is a phosphoserine (Ser-428). Thr-438 bears the Phosphothreonine mark. Ser-511 is modified (phosphoserine). Phosphothreonine occurs at positions 517 and 519. The PI3K/PI4K catalytic domain maps to 535-801; the sequence is EPWQEKVRRI…MVDGSMRSIT (267 aa). Residues 541–547 are G-loop; sequence VRRIREG. A catalytic loop region spans residues 668–676; sequence QVKDRHNGN. An activation loop region spans residues 687 to 711; the sequence is HIDFGFILSSSPRNLGFETSAFKLT.

It belongs to the PI3/PI4-kinase family. Type III PI4K subfamily. As to quaternary structure, interacts with ARF1 and ARF3 in the Golgi complex, but not with ARF4, ARF5 or ARF6. Interacts with NCS1/FREQ in a calcium-independent manner. Interacts with CALN1/CABP8 and CALN2/CABP7; in a calcium-dependent manner; this interaction competes with NCS1/FREQ binding. Interacts with ACBD3. Interacts with ARMH3, YWHAB, YWHAE, YWHAG, YWHAH, YWHAQ, YWHAZ and SFN. Interacts with GGA2 (via VHS domain); the interaction is important for PI4KB location at the Golgi apparatus membrane. Interacts with ATG9A. Requires Mg(2+) as cofactor. It depends on Mn(2+) as a cofactor.

The protein localises to the endomembrane system. It localises to the mitochondrion outer membrane. The protein resides in the rough endoplasmic reticulum membrane. It is found in the golgi apparatus. Its subcellular location is the golgi apparatus membrane. It catalyses the reaction a 1,2-diacyl-sn-glycero-3-phospho-(1D-myo-inositol) + ATP = a 1,2-diacyl-sn-glycero-3-phospho-(1D-myo-inositol 4-phosphate) + ADP + H(+). Inhibited by wortmannin. Increased kinase activity upon interaction with NCS1/FREQ. Its function is as follows. Phosphorylates phosphatidylinositol (PI) in the first committed step in the production of the second messenger inositol-1,4,5,-trisphosphate (PIP). May regulate Golgi disintegration/reorganization during mitosis, possibly via its phosphorylation. Involved in Golgi-to-plasma membrane trafficking. May play an important role in the inner ear development. This chain is Phosphatidylinositol 4-kinase beta (Pi4kb), found in Mus musculus (Mouse).